A 310-amino-acid polypeptide reads, in one-letter code: Apolipoprotein E (310 aa).

An N-terminal signal peptide occupies residues 1 to 18 (MKVLWAALVVTLLAGCGA). Tandem repeats lie at residues 77 to 98 (ALMD…EQLG), 99 to 120 (PVTE…ARLG), 121 to 142 (ADME…AMVG), 143 to 164 (QSTE…KRLL), 165 to 186 (RDAE…EGAE), 187 to 208 (RSVN…TVHT), 209 to 226 (LVSK…QRLR), and 227 to 248 (GRLE…EQVQ). The segment at 77–248 (ALMDDTMKEV…RLDEVREQVQ (172 aa)) is 8 X 22 AA approximate tandem repeats. An LDL and other lipoprotein receptors binding region spans residues 155 to 165 (HLRKMRKRLLR). 159-162 (MRKR) is a binding site for heparin. The interval 207–283 (HTLVSKPLQE…SWFEPLVQDM (77 aa)) is lipid-binding and lipoprotein association. Heparin is bound at residue 222–229 (AQRLRGRL). The segment at 259-310 (NQVRLQAEAFQGRLKSWFEPLVQDMQQKWAELVEKVQLAVGAVPTSVPSEKQ) is homooligomerization. Positions 271 to 283 (RLKSWFEPLVQDM) are specificity for association with VLDL.

Belongs to the apolipoprotein A1/A4/E family. In terms of assembly, homotetramer. May interact with ABCA1; functionally associated with ABCA1 in the biogenesis of HDLs. May interact with APP/A4 amyloid-beta peptide; the interaction is extremely stable in vitro but its physiological significance is unclear. May interact with MAPT. May interact with MAP2. In the cerebrospinal fluid, interacts with secreted SORL1. Interacts with PMEL; this allows the loading of PMEL luminal fragment on ILVs to induce fibril nucleation. In terms of processing, APOE exists as multiple glycosylated and sialylated glycoforms within cells and in plasma. The extent of glycosylation and sialylation are tissue and context specific. Glycated in plasma VLDL. Post-translationally, phosphorylated by FAM20C in the extracellular medium.

The protein localises to the secreted. The protein resides in the extracellular space. It localises to the extracellular matrix. It is found in the extracellular vesicle. Its subcellular location is the endosome. The protein localises to the multivesicular body. APOE is an apolipoprotein, a protein associating with lipid particles, that mainly functions in lipoprotein-mediated lipid transport between organs via the plasma and interstitial fluids. APOE is a core component of plasma lipoproteins and is involved in their production, conversion and clearance. Apolipoproteins are amphipathic molecules that interact both with lipids of the lipoprotein particle core and the aqueous environment of the plasma. As such, APOE associates with chylomicrons, chylomicron remnants, very low density lipoproteins (VLDL) and intermediate density lipoproteins (IDL) but shows a preferential binding to high-density lipoproteins (HDL). It also binds a wide range of cellular receptors including the LDL receptor/LDLR and the very low-density lipoprotein receptor/VLDLR that mediate the cellular uptake of the APOE-containing lipoprotein particles. Finally, APOE also has a heparin-binding activity and binds heparan-sulfate proteoglycans on the surface of cells, a property that supports the capture and the receptor-mediated uptake of APOE-containing lipoproteins by cells. The sequence is that of Apolipoprotein E (APOE) from Ceratotherium simum cottoni (Northern white rhinoceros).